A 333-amino-acid polypeptide reads, in one-letter code: Fatty acid hydroxylase domain-containing protein 2 (333 aa).

6 consecutive transmembrane segments (helical) span residues 29-49, 77-97, 134-154, 168-188, 215-235, and 237-257; these read FILG…TWHL, ILFF…FNGL, TVLF…YPFL, FHWF…LFYY, VISL…PVIV, and PLVM…ALII. The 124-residue stretch at 176–299 folds into the Fatty acid hydroxylase domain; that stretch reads AIFTLIEEVL…LGVLDHLHGT (124 aa).

The protein belongs to the sterol desaturase family. As to expression, down-regulated in primary acute myeloid leukemia (AML) patients.

It is found in the cytoplasm. Its subcellular location is the membrane. Promotes megakaryocyte differentiation by enhancing ERK phosphorylation and up-regulating RUNX1 expression. The polypeptide is Fatty acid hydroxylase domain-containing protein 2 (FAXDC2) (Homo sapiens (Human)).